A 456-amino-acid chain; its full sequence is ACT domain-containing protein ACR5 (456 aa).

ACT domains are found at residues 39 to 115 (VIKV…FSPS), 130 to 207 (VVEL…SSGR), 271 to 347 (IVMI…VSEG), and 349 to 432 (KLEL…PSPQ).

As to expression, expressed in stems and siliques.

May bind amino acids. The sequence is that of ACT domain-containing protein ACR5 from Arabidopsis thaliana (Mouse-ear cress).